The following is a 241-amino-acid chain: Ashwin (241 aa).

Disordered stretches follow at residues 1-21, 82-102, and 212-241; these read MAAQ…SARS, KMME…SVTA, and KRSV…CTWP. Positions 11–21 are enriched in basic and acidic residues; the sequence is GGKEERVSARS.

It belongs to the ashwin family.

It localises to the nucleus. This Gallus gallus (Chicken) protein is Ashwin.